Consider the following 176-residue polypeptide: MFRGTTIVAVRRGDRVSVAGDGQVTFGDSTILKHGAKKIRRLYNGEVIVGFAGSVADAMTLSQKFEEKLEQYGGNLKRAAVELAQEWRKDKILRKLEALLIAADKKDTLLISGTGEVIEPDEDVIGIGSGGNYAMAAALALRYNTDLDTEEIARKALEIASKICVYTNNNITVETL.

Thr-5 is a catalytic residue. Ser-161, Cys-164, and Thr-167 together coordinate Na(+).

It belongs to the peptidase T1B family. HslV subfamily. A double ring-shaped homohexamer of HslV is capped on each side by a ring-shaped HslU homohexamer. The assembly of the HslU/HslV complex is dependent on binding of ATP.

It localises to the cytoplasm. The catalysed reaction is ATP-dependent cleavage of peptide bonds with broad specificity.. Allosterically activated by HslU binding. Protease subunit of a proteasome-like degradation complex believed to be a general protein degrading machinery. This chain is ATP-dependent protease subunit HslV, found in Caldanaerobacter subterraneus subsp. tengcongensis (strain DSM 15242 / JCM 11007 / NBRC 100824 / MB4) (Thermoanaerobacter tengcongensis).